A 611-amino-acid polypeptide reads, in one-letter code: Alpha-1,2-mannosyltransferase ALG9 (611 aa).

Residues 1–10 (MASRGARQRL) are compositionally biased toward basic residues. The interval 1–23 (MASRGARQRLKGSGASSGDTAPA) is disordered. Over 1 to 135 (MASRGARQRL…FHARILQTNK (135 aa)) the chain is Lumenal. Residue N77 is glycosylated (N-linked (GlcNAc...) asparagine). The chain crosses the membrane as a helical span at residues 136–156 (ILVFYFLRCLLAFVSCICELY). The Cytoplasmic portion of the chain corresponds to 157–171 (FYKAVCKKFGLHVSR). The chain crosses the membrane as a helical span at residues 172 to 192 (MMLAFLVLSTGMFCSSSAFLP). Residues 193-213 (SSFCMYTTLIAMTGWYMDKTS) lie on the Lumenal side of the membrane. Residues 214–234 (IAVLGVAAGAILGWPFSAALG) traverse the membrane as a helical segment. At 235–249 (LPIAFDLLVMKHRWK) the chain is on the cytoplasmic side. Residues 250–270 (SFFHWSLMALILFLVPVVVID) form a helical membrane-spanning segment. Topologically, residues 271 to 304 (SYYYGKLVIAPLNIVLYNVFTPHGPDLYGTEPWY) are lumenal. Residues 305 to 325 (FYLINGFLNFNVAFALALLVL) traverse the membrane as a helical segment. Residues 326 to 342 (PLTSLMEYLLQRFHVQN) are Cytoplasmic-facing. A helical membrane pass occupies residues 343-363 (LGHPYWLTLAPMYIWFIIFFI). Topologically, residues 364–370 (QPHKEER) are lumenal. Residues 371-391 (FLFPVYPLICLCGAVALSALQ) traverse the membrane as a helical segment. The Cytoplasmic segment spans residues 392-405 (KCYHFVFQRYRLEH). The helical transmembrane segment at 406 to 426 (YTVTSNWLALGTVFLFGLLSF) threads the bilayer. The Lumenal portion of the chain corresponds to 427–611 (SRSVALFRGY…AKQIRKKSGG (185 aa)). N593 carries N-linked (GlcNAc...) asparagine glycosylation.

The protein belongs to the glycosyltransferase 22 family. In terms of tissue distribution, ubiquitously expressed; with highest levels in heart, liver and pancreas.

The protein resides in the endoplasmic reticulum membrane. The enzyme catalyses an alpha-D-Man-(1-&gt;2)-alpha-D-Man-(1-&gt;2)-alpha-D-Man-(1-&gt;3)-[alpha-D-Man-(1-&gt;3)-alpha-D-Man-(1-&gt;6)]-beta-D-Man-(1-&gt;4)-beta-D-GlcNAc-(1-&gt;4)-alpha-D-GlcNAc-diphospho-di-trans,poly-cis-dolichol + a di-trans,poly-cis-dolichyl beta-D-mannosyl phosphate = an alpha-D-Man-(1-&gt;2)-alpha-D-Man-(1-&gt;2)-alpha-D-Man-(1-&gt;3)-[alpha-D-Man-(1-&gt;2)-alpha-D-Man-(1-&gt;3)-alpha-D-Man-(1-&gt;6)]-beta-D-Man-(1-&gt;4)-beta-D-GlcNAc-(1-&gt;4)-alpha-D-GlcNAc-diphospho-di-trans,poly-cis-dolichol + a di-trans,poly-cis-dolichyl phosphate + H(+). The catalysed reaction is an alpha-D-Man-(1-&gt;2)-alpha-D-Man-(1-&gt;2)-alpha-D-Man-(1-&gt;3)-[alpha-D-Man-(1-&gt;2)-alpha-D-Man-(1-&gt;3)-[alpha-D-Man-(1-&gt;6)]-alpha-D-Man-(1-&gt;6)]-beta-D-Man-(1-&gt;4)-beta-D-GlcNAc-(1-&gt;4)-alpha-D-GlcNAc-diphospho-di-trans,poly-cis-dolichol + a di-trans,poly-cis-dolichyl beta-D-mannosyl phosphate = an alpha-D-Man-(1-&gt;2)-alpha-D-Man-(1-&gt;2)-alpha-D-Man-(1-&gt;3)-[alpha-D-Man-(1-&gt;2)-alpha-D-Man-(1-&gt;3)-[alpha-D-Man-(1-&gt;2)-alpha-D-Man-(1-&gt;6)]-alpha-D-Man-(1-&gt;6)]-beta-D-Man-(1-&gt;4)-beta-D-GlcNAc-(1-&gt;4)-alpha-D-GlcNAc-diphospho-di-trans,poly-cis-dolichol + a di-trans,poly-cis-dolichyl phosphate + H(+). Its pathway is protein modification; protein glycosylation. In terms of biological role, mannosyltransferase that operates in the biosynthetic pathway of dolichol-linked oligosaccharides, the glycan precursors employed in protein asparagine (N)-glycosylation. The assembly of dolichol-linked oligosaccharides begins on the cytosolic side of the endoplasmic reticulum membrane and finishes in its lumen. The sequential addition of sugars to dolichol pyrophosphate produces dolichol-linked oligosaccharides containing fourteen sugars, including two GlcNAcs, nine mannoses and three glucoses. Once assembled, the oligosaccharide is transferred from the lipid to nascent proteins by oligosaccharyltransferases. In the lumen of the endoplasmic reticulum, catalyzes the addition of the seventh and ninth alpha-1,2-linked mannose residues to Man(6)GlcNAc(2)-PP-dolichol and Man(8)GlcNAc(2)-PP-dolichol respectively. The polypeptide is Alpha-1,2-mannosyltransferase ALG9 (Homo sapiens (Human)).